Consider the following 126-residue polypeptide: Large ribosomal subunit protein bL12 (126 aa).

It belongs to the bacterial ribosomal protein bL12 family. Homodimer. Part of the ribosomal stalk of the 50S ribosomal subunit. Forms a multimeric L10(L12)X complex, where L10 forms an elongated spine to which 2 to 4 L12 dimers bind in a sequential fashion. Binds GTP-bound translation factors.

Forms part of the ribosomal stalk which helps the ribosome interact with GTP-bound translation factors. Is thus essential for accurate translation. In Bordetella petrii (strain ATCC BAA-461 / DSM 12804 / CCUG 43448), this protein is Large ribosomal subunit protein bL12.